The following is an 884-amino-acid chain: uncharacterized protein (884 aa).

This is an uncharacterized protein from Mycobacterium tuberculosis (strain ATCC 25618 / H37Rv).